Reading from the N-terminus, the 347-residue chain is tRNA N6-adenosine threonylcarbamoyltransferase (347 aa).

Fe cation-binding residues include H115 and H119. Substrate is bound by residues 137 to 141 (LASGG), D170, G183, and N281. D309 is a binding site for Fe cation.

The protein belongs to the KAE1 / TsaD family. Fe(2+) serves as cofactor.

It localises to the cytoplasm. The catalysed reaction is L-threonylcarbamoyladenylate + adenosine(37) in tRNA = N(6)-L-threonylcarbamoyladenosine(37) in tRNA + AMP + H(+). Its function is as follows. Required for the formation of a threonylcarbamoyl group on adenosine at position 37 (t(6)A37) in tRNAs that read codons beginning with adenine. Is involved in the transfer of the threonylcarbamoyl moiety of threonylcarbamoyl-AMP (TC-AMP) to the N6 group of A37, together with TsaE and TsaB. TsaD likely plays a direct catalytic role in this reaction. In Methylorubrum extorquens (strain CM4 / NCIMB 13688) (Methylobacterium extorquens), this protein is tRNA N6-adenosine threonylcarbamoyltransferase.